A 345-amino-acid polypeptide reads, in one-letter code: UDP-N-acetylenolpyruvoylglucosamine reductase (345 aa).

Residues 16–186 enclose the FAD-binding PCMH-type domain; sequence LSVSASCIKV…TAVGIFLKKE (171 aa). Residue Arg-162 is part of the active site. The Proton donor role is filled by Ser-232. The active site involves Glu-328.

The protein belongs to the MurB family. FAD is required as a cofactor.

The protein localises to the cytoplasm. The enzyme catalyses UDP-N-acetyl-alpha-D-muramate + NADP(+) = UDP-N-acetyl-3-O-(1-carboxyvinyl)-alpha-D-glucosamine + NADPH + H(+). It participates in cell wall biogenesis; peptidoglycan biosynthesis. In terms of biological role, cell wall formation. The protein is UDP-N-acetylenolpyruvoylglucosamine reductase of Pectobacterium atrosepticum (strain SCRI 1043 / ATCC BAA-672) (Erwinia carotovora subsp. atroseptica).